The sequence spans 303 residues: Coenzyme PQQ synthesis protein B (303 aa).

The protein belongs to the PqqB family.

It functions in the pathway cofactor biosynthesis; pyrroloquinoline quinone biosynthesis. Its function is as follows. May be involved in the transport of PQQ or its precursor to the periplasm. The polypeptide is Coenzyme PQQ synthesis protein B (Acinetobacter baumannii (strain ACICU)).